The chain runs to 63 residues: Large ribosomal subunit protein bL28 (63 aa).

The protein belongs to the bacterial ribosomal protein bL28 family.

The protein is Large ribosomal subunit protein bL28 (rpmB) of Selenomonas ruminantium.